The following is a 295-amino-acid chain: Regucalcin (295 aa).

Position 18 (glutamate 18) interacts with a divalent metal cation. Arginine 100, asparagine 102, and aspartate 120 together coordinate substrate. A divalent metal cation is bound by residues asparagine 150 and aspartate 200. The Proton donor/acceptor role is filled by aspartate 200.

The protein belongs to the SMP-30/CGR1 family. Zn(2+) serves as cofactor. The cofactor is Mn(2+). It depends on Ca(2+) as a cofactor. Mg(2+) is required as a cofactor.

Its subcellular location is the cytoplasm. It catalyses the reaction D-glucono-1,5-lactone + H2O = D-gluconate + H(+). It participates in cofactor biosynthesis; L-ascorbate biosynthesis via UDP-alpha-D-glucuronate pathway; L-ascorbate from UDP-alpha-D-glucuronate: step 3/4. In terms of biological role, gluconolactonase with low activity towards other sugar lactones, including gulonolactone and galactonolactone. Catalyzes a key step in ascorbic acid (vitamin C) biosynthesis. Can also hydrolyze diisopropyl phosphorofluoridate and phenylacetate (in vitro). Calcium-binding protein. Modulates Ca(2+) signaling, and Ca(2+)-dependent cellular processes and enzyme activities. This Danio rerio (Zebrafish) protein is Regucalcin.